Here is a 224-residue protein sequence, read N- to C-terminus: Probable proteasome subunit beta type-4 (224 aa).

This sequence belongs to the peptidase T1B family. In terms of assembly, the 26S proteasome consists of a 20S proteasome core and two 19S regulatory subunits. The 20S proteasome core is composed of 28 subunits that are arranged in four stacked rings, resulting in a barrel-shaped structure. The two end rings are each formed by seven alpha subunits, and the two central rings are each formed by seven beta subunits. The catalytic chamber with the active sites is on the inside of the barrel.

It localises to the cytoplasm. It is found in the nucleus. Functionally, non-catalytic component of the proteasome, a multicatalytic proteinase complex which is characterized by its ability to cleave peptides with Arg, Phe, Tyr, Leu, and Glu adjacent to the leaving group at neutral or slightly basic pH. The proteasome has an ATP-dependent proteolytic activity. In Cryptococcus neoformans var. neoformans serotype D (strain B-3501A) (Filobasidiella neoformans), this protein is Probable proteasome subunit beta type-4 (CPR1).